The sequence spans 239 residues: SkfA peptide export ATP-binding protein SkfE (239 aa).

The 229-residue stretch at 4–232 (MQVQNLSKCY…AEWRKEVIRL (229 aa)) folds into the ABC transporter domain. 36–43 (GPNGAGKT) lines the ATP pocket.

This sequence belongs to the ABC transporter superfamily. SkfA peptide export (TC 3.A.1.128.1) family.

The protein resides in the cell membrane. The enzyme catalyses sulfate(out) + ATP + H2O = sulfate(in) + ADP + phosphate + H(+). The catalysed reaction is thiosulfate(out) + ATP + H2O = thiosulfate(in) + ADP + phosphate + H(+). In terms of biological role, probably part of the ABC transporter SkfEF involved in the export of the bacteriocin SKF. Probably responsible for energy coupling to the transport system. In Bacillus subtilis (strain 168), this protein is SkfA peptide export ATP-binding protein SkfE.